Reading from the N-terminus, the 196-residue chain is Large ribosomal subunit protein bL9 (196 aa).

Belongs to the bacterial ribosomal protein bL9 family.

In terms of biological role, binds to the 23S rRNA. In Bradyrhizobium sp. (strain ORS 278), this protein is Large ribosomal subunit protein bL9.